Reading from the N-terminus, the 471-residue chain is N-succinylglutamate 5-semialdehyde dehydrogenase (471 aa).

Residue Gly207–Gly212 coordinates NAD(+). Residues Glu230 and Cys264 contribute to the active site.

Belongs to the aldehyde dehydrogenase family. AstD subfamily.

The enzyme catalyses N-succinyl-L-glutamate 5-semialdehyde + NAD(+) + H2O = N-succinyl-L-glutamate + NADH + 2 H(+). The protein operates within amino-acid degradation; L-arginine degradation via AST pathway; L-glutamate and succinate from L-arginine: step 4/5. In terms of biological role, catalyzes the NAD-dependent reduction of succinylglutamate semialdehyde into succinylglutamate. The chain is N-succinylglutamate 5-semialdehyde dehydrogenase from Novosphingobium aromaticivorans (strain ATCC 700278 / DSM 12444 / CCUG 56034 / CIP 105152 / NBRC 16084 / F199).